The following is a 246-amino-acid chain: MKALIIDDEPLARNELTYLLNEIGGFEEINEAENVKETLEALLINQYDIIFLDVNLMDENGIELGAKIQKMKEPPAIIFATAHDQYAVQAFELNATDYILKPFGQKRIEQAVNKVRATKAKDDNNASAIANDMSANFDQSLPVEIDDKIHMLKQQNIIGIGTHNGITTIHTTNHKYETTEPLNRYEKRLNPTYFIRIHRSYIINTKHIKEVQQWFNYTYMVILTNGVKMQVGRSFMKDFKASIGLL.

In terms of domain architecture, Response regulatory spans 2–116; the sequence is KALIIDDEPL…RIEQAVNKVR (115 aa). Position 53 is a 4-aspartylphosphate (Asp-53). Residues 141–245 enclose the HTH LytTR-type domain; sequence LPVEIDDKIH…MKDFKASIGL (105 aa).

As to quaternary structure, homodimer; when phosphorylated. Post-translationally, phosphorylated and dephosphorylated by LytS.

Its subcellular location is the cytoplasm. Functionally, member of the two-component regulatory system LytR/LytS that regulates genes involved in autolysis, programmed cell death, biofilm formation and cell wall metabolism. Also participates in sensing and responding to host defense cationic antimicrobial peptides (HDPs). Upon phosphorylation by LytS, functions as a transcription regulator by direct binding to promoter regions of target genes including lrgA and lrgB, to positively regulate their expression. The chain is Transcriptional regulatory protein LytR (lytR) from Staphylococcus aureus (strain USA300).